Reading from the N-terminus, the 322-residue chain is Acetyl-coenzyme A carboxylase carboxyl transferase subunit alpha (322 aa).

The CoA carboxyltransferase C-terminal domain maps to 39 to 296 (DLTALKKQLI…HSKLVTELNY (258 aa)).

Belongs to the AccA family. As to quaternary structure, acetyl-CoA carboxylase is a heterohexamer composed of biotin carboxyl carrier protein (accB), biotin carboxylase (accC) and two subunits each of ACCase subunit alpha (accA) and ACCase subunit beta (accD).

Its subcellular location is the plastid. It localises to the chloroplast. The enzyme catalyses N(6)-carboxybiotinyl-L-lysyl-[protein] + acetyl-CoA = N(6)-biotinyl-L-lysyl-[protein] + malonyl-CoA. It functions in the pathway lipid metabolism; malonyl-CoA biosynthesis; malonyl-CoA from acetyl-CoA: step 1/1. In terms of biological role, component of the acetyl coenzyme A carboxylase (ACC) complex. First, biotin carboxylase catalyzes the carboxylation of biotin on its carrier protein (BCCP) and then the CO(2) group is transferred by the carboxyltransferase to acetyl-CoA to form malonyl-CoA. The polypeptide is Acetyl-coenzyme A carboxylase carboxyl transferase subunit alpha (Antithamnion sp. (Red alga)).